Consider the following 332-residue polypeptide: 2,3-diketo-L-gulonate reductase (332 aa).

His44 serves as the catalytic Proton donor. NAD(+) contacts are provided by residues 168-174, 224-225, and 304-306; these read ITMVDMS, WK, and GHE.

Belongs to the LDH2/MDH2 oxidoreductase family. DlgD subfamily. Homodimer.

Its subcellular location is the cytoplasm. The catalysed reaction is 3-dehydro-L-gulonate + NAD(+) = 2,3-dioxo-L-gulonate + NADH + H(+). The enzyme catalyses 3-dehydro-L-gulonate + NADP(+) = 2,3-dioxo-L-gulonate + NADPH + H(+). Functionally, catalyzes the reduction of 2,3-diketo-L-gulonate in the presence of NADH, to form 3-keto-L-gulonate. This is 2,3-diketo-L-gulonate reductase from Mannheimia succiniciproducens (strain KCTC 0769BP / MBEL55E).